A 242-amino-acid polypeptide reads, in one-letter code: Small ribosomal subunit protein uS7m (242 aa).

A mitochondrion-targeting transit peptide spans 1 to 37; that stretch reads MAAPALRAPLRWSGLALGVRCAVWNLPGLTQVRGSRY. Lys-228 is modified (N6-acetyllysine).

This sequence belongs to the universal ribosomal protein uS7 family. Component of the mitochondrial ribosome small subunit (28S) which comprises a 12S rRNA and about 30 distinct proteins.

It is found in the mitochondrion. The sequence is that of Small ribosomal subunit protein uS7m (Mrps7) from Mus musculus (Mouse).